Here is a 989-residue protein sequence, read N- to C-terminus: Voltage-gated delayed rectifier potassium channel KCNH1 (989 aa).

The Cytoplasmic segment spans residues 1 to 220 (MTMAGGRRGL…LHYCVFKTTW (220 aa)). The 81-residue stretch at 14 to 94 (QNTFLENIVR…QTFENYEMNS (81 aa)) folds into the PAS domain. Residues 93-145 (NSFEILMYKKNRTPVWFFVKIAPIRNEQDKVVLFLCTFSDITAFKQPIEDDSC) form the PAC domain. The required for phosphatidylinositol bisphosphate binding stretch occupies residues 151–162 (FARLTRALTSSR). A helical membrane pass occupies residues 221–241 (DWIILILTFYTAILVPYNVSF). The Extracellular segment spans residues 242–248 (KTRQNNV). Residues 249–269 (AWLVVDSIVDVIFLVDIVLNF) form a helical membrane-spanning segment. Topologically, residues 270–290 (HTTFVGPAGEVISDPKLIRMN) are cytoplasmic. The helical transmembrane segment at 291-309 (YLKTWFVIDLLSCLPYDVI) threads the bilayer. The Extracellular segment spans residues 310 to 345 (NAFENVDEVSAFMGDPGKIGFADQIPPPLEGRESQG). A helical; Voltage-sensor membrane pass occupies residues 346-368 (ISSLFSSLKVVRLLRLGRVARKL). Residues 369 to 377 (DHYIEYGAA) are Cytoplasmic-facing. The chain crosses the membrane as a helical span at residues 378–399 (VLVLLVCVFGLAAHWMACIWYS). The Extracellular segment spans residues 400 to 448 (IGDYEIFDEDTKTIRNNSWLYQLAMDIGTPYQFNGSGSGKWEGGPSKNS). Residues asparagine 415 and asparagine 433 are each glycosylated (N-linked (GlcNAc...) asparagine). Positions 449–470 (VYISSLYFTMTSLTSVGFGNIA) form an intramembrane region, pore-forming. A Selectivity filter motif is present at residues 463–468 (SVGFGN). The Extracellular portion of the chain corresponds to 471–477 (PSTDIEK). A helical transmembrane segment spans residues 478–498 (IFAVAIMMIGSLLYATIFGNV). Residues 499–989 (TTIFQQMYAN…ESERDIFGAS (491 aa)) are Cytoplasmic-facing. Residues 673–770 (KRDALQKVLE…LDDLDVEKGN (98 aa)) form a calmodulin-binding region. The interaction with cyclic nucleotide-binding pocket stretch occupies residues 699–701 (YNL). Basic and acidic residues predominate over residues 855–879 (KAESMETLPERTKASGEATLKKTDS). Disordered regions lie at residues 855 to 886 (KAES…GITK) and 962 to 989 (RSSQ…FGAS). The CAD (involved in subunit assembly) stretch occupies residues 924–964 (ATVLEVRHELKEDIKALNAKMTNIEKQLSEILRILTSRRSS). Residues serine 974, serine 978, and serine 981 each carry the phosphoserine modification. Residues 980-989 (ESERDIFGAS) show a composition bias toward basic and acidic residues.

The protein belongs to the potassium channel family. H (Eag) (TC 1.A.1.20) subfamily. Kv10.1/KCNH1 sub-subfamily. Homomultimer. The potassium channel is composed of a homo- or heterotetrameric complex of pore-forming alpha subunits that can associate with modulating beta subunits. Heteromultimer with KCNH5/EAG2. Interacts with ALG10B. Interacts with RABEP1. Interacts (via C-terminus) with CTTN. Interacts (via C-terminal cytoplasmic region) with Ca(2+)-bound calmodulin. Interacts with the spider kappa-theraphotoxin-Aa1a and mu/kappa-theraphotoxin-Ap1a. Post-translationally, channel activity is regulated via tyrosine phosphorylation/dephosphorylation by SRC and PTPN6. As to expression, highly expressed in brain and in myoblasts at the onset of fusion, but not in other tissues. Detected in HeLa (cervical carcinoma), SH-SY5Y (neuroblastoma) and MCF-7 (epithelial tumor) cells, but not in normal epithelial cells.

Its subcellular location is the cell membrane. The protein resides in the nucleus inner membrane. It is found in the cell projection. It localises to the dendrite. The protein localises to the axon. Its subcellular location is the presynaptic cell membrane. The protein resides in the perikaryon. It is found in the postsynaptic density membrane. It localises to the early endosome membrane. It carries out the reaction K(+)(in) = K(+)(out). With respect to regulation, channel activity is inhibited by interaction with Ca(2+)-bound calmodulin. Interaction of a single pore-forming alpha subunit with a calmodulin chain is sufficient to promote channel closure. Channel activity is not regulated by cyclic nucleotides. Channel activity is inhibited by binding intracellular phosphatidylinositol-3,5-bisphosphate and phosphatidylinositol-4,5-bisphosphate (PIP2), but is not inhibited by phosphatidylinositol 4-phosphate. Inhibited by the spider kappa-theraphotoxin-Aa1a and mu/kappa-theraphotoxin-Ap1a. Functionally, pore-forming (alpha) subunit of a voltage-gated delayed rectifier potassium channel that mediates outward-rectifying potassium currents which, on depolarization, reaches a steady-state level and do not inactivate. The activation kinetics depend on the prepulse potential and external divalent cation concentration. With negative prepulses, the current activation is delayed and slowed down several fold, whereas more positive prepulses speed up activation. The time course of activation is biphasic with a fast and a slowly activating current component. Activates at more positive membrane potentials and exhibit a steeper activation curve. Channel properties are modulated by subunit assembly. Mediates IK(NI) current in myoblasts. Involved in the regulation of cell proliferation and differentiation, in particular adipogenic and osteogenic differentiation in bone marrow-derived mesenchymal stem cells (MSCs). In Homo sapiens (Human), this protein is Voltage-gated delayed rectifier potassium channel KCNH1.